Here is an 876-residue protein sequence, read N- to C-terminus: Alanine--tRNA ligase (876 aa).

Lys-74 carries the N6-acetyllysine modification. Zn(2+) is bound by residues His-564, His-568, Cys-666, and His-670.

Belongs to the class-II aminoacyl-tRNA synthetase family. As to quaternary structure, homotetramer. Zn(2+) is required as a cofactor.

It localises to the cytoplasm. The enzyme catalyses tRNA(Ala) + L-alanine + ATP = L-alanyl-tRNA(Ala) + AMP + diphosphate. In terms of biological role, catalyzes the attachment of alanine to tRNA(Ala) in a two-step reaction: alanine is first activated by ATP to form Ala-AMP and then transferred to the acceptor end of tRNA(Ala). Also edits incorrectly charged Ser-tRNA(Ala) and Gly-tRNA(Ala) via its editing domain. The sequence is that of Alanine--tRNA ligase from Escherichia coli (strain SMS-3-5 / SECEC).